The sequence spans 144 residues: Superoxide dismutase [Mn] 1 (144 aa).

Mn(2+) contacts are provided by histidine 42, aspartate 124, and histidine 128.

Belongs to the iron/manganese superoxide dismutase family. Mn(2+) serves as cofactor.

The enzyme catalyses 2 superoxide + 2 H(+) = H2O2 + O2. Destroys superoxide anion radicals which are normally produced within the cells and which are toxic to biological systems. The protein is Superoxide dismutase [Mn] 1 (sod1) of Haloferax mediterranei (Halobacterium mediterranei).